The following is a 165-amino-acid chain: Selenoprotein F (165 aa).

A signal peptide spans 1 to 31; that stretch reads MVAMAAGPSGCLVPAFGLRLLLATVLQAVSA. A non-standard amino acid (selenocysteine) is located at residue Sec96.

In terms of assembly, forms a tight complex with UGGT1/UGCGL1. Interacts with UGGT2/UGCGL2. Interacts with RDH11. In terms of processing, the N-terminus is blocked. In terms of tissue distribution, higher levels in prostate and thyroid gland.

The protein localises to the endoplasmic reticulum lumen. May be involved in redox reactions associated with the formation of disulfide bonds. May contribute to the quality control of protein folding in the endoplasmic reticulum. May regulate protein folding by enhancing the catalytic activity of UGGT1/UGCGL1 and UGGT2/UGCGL2. The protein is Selenoprotein F of Homo sapiens (Human).